Consider the following 604-residue polypeptide: MQLFNLPLKVSFFLVLSYFSLLVSAASIPSSASVQLDSYNYDGSTFSGKIYVKNIAYSKKVTVIYADGSDNWNNNGNTIAASYSAPISGSNYEYWTFSASINGIKEFYIKYEVSGKTYYDNNNSANYQVSTSKPTTTTATATTTTAPSTSTTTPPSRSEPATFPTGNSTISSWIKKQEGISRFAMLRNINPPGSATGFIAASLSTAGPDYYYAWTRDAALTSNVIVYEYNTTLSGNKTILNVLKDYVTFSVKTQSTSTVCNCLGEPKFNPDASGYTGAWGRPQNDGPAERATTFILFADSYLTQTKDASYVTGTLKPAIFKDLDYVVNVWSNGCFDLWEEVNGVHFYTLMVMRKGLLLGADFAKRNGDSTRASTYSSTASTIANKISSFWVSSNNWIQVSQSVTGGVSKKGLDVSTLLAANLGSVDDGFFTPGSEKILATAVAVEDSFASLYPINKNLPSYLGNSIGRYPEDTYNGNGNSQGNSWFLAVTGYAELYYRAIKEWIGNGGVTVSSISLPFFKKFDSSATSGKKYTVGTSDFNNLAQNIALAADRFLSTVQLHAHNNGSLAEEFDRTTGLSTGARDLTWSHASLITASYAKAGAPAA.

An N-terminal signal peptide occupies residues 1 to 25; sequence MQLFNLPLKVSFFLVLSYFSLLVSA. Residues 26-115 are adsorption to raw starch; the sequence is ASIPSSASVQ…EFYIKYEVSG (90 aa). Residues 26-130 enclose the CBM21 domain; the sequence is ASIPSSASVQ…NNNSANYQVS (105 aa). The starch degradation stretch occupies residues 116–604; the sequence is KTYYDNNNSA…SYAKAGAPAA (489 aa). The N-linked (GlcNAc...) asparagine glycan is linked to N122. The interval 127 to 164 is disordered; the sequence is YQVSTSKPTTTTATATTTTAPSTSTTTPPSRSEPATFP. The span at 130–162 shows a compositional bias: low complexity; it reads STSKPTTTTATATTTTAPSTSTTTPPSRSEPAT. 3 N-linked (GlcNAc...) asparagine glycosylation sites follow: N167, N230, and N236. Substrate is bound at residue W279. The active-site Proton acceptor is D336. Residue E339 is the Proton donor of the active site. N564 is a glycosylation site (N-linked (GlcNAc...) asparagine).

This sequence belongs to the glycosyl hydrolase 15 family.

It catalyses the reaction Hydrolysis of terminal (1-&gt;4)-linked alpha-D-glucose residues successively from non-reducing ends of the chains with release of beta-D-glucose.. In Rhizopus oryzae (Mucormycosis agent), this protein is Glucoamylase 1.